Here is a 261-residue protein sequence, read N- to C-terminus: Pyridoxine-5'-phosphate oxidase (261 aa).

Pyridoxal 5'-phosphate is bound at residue 42 to 45 (RGDP). 95–98 (RMVL) serves as a coordination point for FMN. Lys100 contributes to the pyridoxal 5'-phosphate binding site. Residues 110–111 (FT), 116–117 (RK), and Gln139 contribute to the FMN site. Positions 157, 161, and 165 each coordinate pyridoxal 5'-phosphate. Residues 174 to 175 (QS) and Trp219 contribute to the FMN site. 225–227 (RLH) is a pyridoxal 5'-phosphate binding site. Position 229 (Arg229) interacts with FMN. Thr238 is subject to Phosphothreonine. Residue Ser241 is modified to Phosphoserine.

This sequence belongs to the pyridoxamine 5'-phosphate oxidase family. Homodimer. The cofactor is FMN.

It catalyses the reaction pyridoxamine 5'-phosphate + O2 + H2O = pyridoxal 5'-phosphate + H2O2 + NH4(+). The catalysed reaction is pyridoxine 5'-phosphate + O2 = pyridoxal 5'-phosphate + H2O2. The protein operates within cofactor metabolism; pyridoxal 5'-phosphate salvage; pyridoxal 5'-phosphate from pyridoxamine 5'-phosphate: step 1/1. Its pathway is cofactor metabolism; pyridoxal 5'-phosphate salvage; pyridoxal 5'-phosphate from pyridoxine 5'-phosphate: step 1/1. Catalyzes the oxidation of either pyridoxine 5'-phosphate (PNP) or pyridoxamine 5'-phosphate (PMP) into pyridoxal 5'-phosphate (PLP). This Bos taurus (Bovine) protein is Pyridoxine-5'-phosphate oxidase (PNPO).